The chain runs to 218 residues: Methylthioribulose-1-phosphate dehydratase (218 aa).

His107 and His109 together coordinate Zn(2+).

It belongs to the aldolase class II family. MtnB subfamily. Requires Zn(2+) as cofactor.

It catalyses the reaction 5-(methylsulfanyl)-D-ribulose 1-phosphate = 5-methylsulfanyl-2,3-dioxopentyl phosphate + H2O. The protein operates within amino-acid biosynthesis; L-methionine biosynthesis via salvage pathway; L-methionine from S-methyl-5-thio-alpha-D-ribose 1-phosphate: step 2/6. In terms of biological role, catalyzes the dehydration of methylthioribulose-1-phosphate (MTRu-1-P) into 2,3-diketo-5-methylthiopentyl-1-phosphate (DK-MTP-1-P). In Xylella fastidiosa (strain Temecula1 / ATCC 700964), this protein is Methylthioribulose-1-phosphate dehydratase.